We begin with the raw amino-acid sequence, 353 residues long: Photosystem II D2 protein (353 aa).

Residue Thr2 is modified to N-acetylthreonine. Thr2 carries the post-translational modification Phosphothreonine. A helical transmembrane segment spans residues 41 to 61 (CAYFALGGWFTGTTFVTSWYT). His118 is a chlorophyll a binding site. The chain crosses the membrane as a helical span at residues 125 to 141 (GFMLRQFELARSVQLRP). The pheophytin a site is built by Gln130 and Asn143. A helical membrane pass occupies residues 153–166 (VFVSVFLIYPLGQS). His198 contributes to the chlorophyll a binding site. A helical transmembrane segment spans residues 208-228 (AALLCAIHGATVENTLFEDGD). A plastoquinone contacts are provided by His215 and Phe262. His215 serves as a coordination point for Fe cation. Position 269 (His269) interacts with Fe cation. The chain crosses the membrane as a helical span at residues 279–295 (GLWMSAIGVVGLALNLR).

It belongs to the reaction center PufL/M/PsbA/D family. In terms of assembly, PSII is composed of 1 copy each of membrane proteins PsbA, PsbB, PsbC, PsbD, PsbE, PsbF, PsbH, PsbI, PsbJ, PsbK, PsbL, PsbM, PsbT, PsbX, PsbY, PsbZ, Psb30/Ycf12, at least 3 peripheral proteins of the oxygen-evolving complex and a large number of cofactors. It forms dimeric complexes. It depends on The D1/D2 heterodimer binds P680, chlorophylls that are the primary electron donor of PSII, and subsequent electron acceptors. It shares a non-heme iron and each subunit binds pheophytin, quinone, additional chlorophylls, carotenoids and lipids. There is also a Cl(-1) ion associated with D1 and D2, which is required for oxygen evolution. The PSII complex binds additional chlorophylls, carotenoids and specific lipids. as a cofactor.

The protein localises to the plastid. It is found in the chloroplast thylakoid membrane. The catalysed reaction is 2 a plastoquinone + 4 hnu + 2 H2O = 2 a plastoquinol + O2. In terms of biological role, photosystem II (PSII) is a light-driven water:plastoquinone oxidoreductase that uses light energy to abstract electrons from H(2)O, generating O(2) and a proton gradient subsequently used for ATP formation. It consists of a core antenna complex that captures photons, and an electron transfer chain that converts photonic excitation into a charge separation. The D1/D2 (PsbA/PsbD) reaction center heterodimer binds P680, the primary electron donor of PSII as well as several subsequent electron acceptors. D2 is needed for assembly of a stable PSII complex. The chain is Photosystem II D2 protein from Pinus thunbergii (Japanese black pine).